The following is a 458-amino-acid chain: UDP-N-acetylmuramoylalanine--D-glutamate ligase (458 aa).

Residue 124–130 (GSDGKTT) coordinates ATP.

It belongs to the MurCDEF family.

It is found in the cytoplasm. The enzyme catalyses UDP-N-acetyl-alpha-D-muramoyl-L-alanine + D-glutamate + ATP = UDP-N-acetyl-alpha-D-muramoyl-L-alanyl-D-glutamate + ADP + phosphate + H(+). It functions in the pathway cell wall biogenesis; peptidoglycan biosynthesis. Cell wall formation. Catalyzes the addition of glutamate to the nucleotide precursor UDP-N-acetylmuramoyl-L-alanine (UMA). This chain is UDP-N-acetylmuramoylalanine--D-glutamate ligase, found in Clostridium perfringens (strain 13 / Type A).